A 109-amino-acid polypeptide reads, in one-letter code: Flagellar hook-basal body complex protein FliE (109 aa).

It belongs to the FliE family.

Its subcellular location is the bacterial flagellum basal body. This chain is Flagellar hook-basal body complex protein FliE, found in Pseudomonas savastanoi pv. phaseolicola (strain 1448A / Race 6) (Pseudomonas syringae pv. phaseolicola (strain 1448A / Race 6)).